A 1035-amino-acid polypeptide reads, in one-letter code: GRB10-interacting GYF protein 1 (1035 aa).

Phosphoserine occurs at positions 24, 28, 137, and 157. The segment at 105–422 (KGAGPPLAGT…AGPPGDLEDD (318 aa)) is disordered. Composition is skewed to basic and acidic residues over residues 148-179 (SPRE…RCGF) and 186-203 (PRKE…SLRE). Ser230 carries the phosphoserine modification. A compositionally biased stretch (basic and acidic residues) spans 239 to 267 (GWREHGERRRKFEFDLRGDRGGCGEEEGR). Acidic residues-rich tracts occupy residues 295–304 (CLDDEDEEMG) and 324–349 (PEEQ…EEGP). Ser341 is modified (phosphoserine). Residues 367-378 (SSPSPLPTLGPL) show a composition bias toward low complexity. Residues 388–401 (TAEKEPPAAEDDIR) are compositionally biased toward basic and acidic residues. Residue Ser406 is modified to Phosphoserine. Residues 406–417 (SPGVGSSAGPPG) show a composition bias toward low complexity. One can recognise a GYF domain in the interval 474 to 522 (ARKWFYKDPQGEIQGPFTTQEMAEWFQAGYFSMSLLVKRGCDEGFQPLG). A phosphoserine mark is found at Ser538 and Ser638. Disordered stretches follow at residues 621–640 (PPRG…LSVP), 696–724 (KREE…QEEE), and 825–879 (WGGP…RPIR). The span at 629-639 (LLPTMSRSLSV) shows a compositional bias: polar residues. The span at 696 to 722 (KREEEERKRREEKRRQQQQEEQKRRQE) shows a compositional bias: basic and acidic residues. The segment covering 857–874 (LKNSRSSPSLSDSYSHLS) has biased composition (low complexity). Residue Ser862 is modified to Phosphoserine.

It belongs to the GIGYF family. Interacts with GRB10. This transient binding is increased under IGF1 stimulation and leads to recruitment of GIGYF1/GRB10 complex to IGF1 receptor. Interacts with DDX6.

In terms of biological role, may act cooperatively with GRB10 to regulate tyrosine kinase receptor signaling. May increase IGF1 receptor phosphorylation under IGF1 stimulation as well as phosphorylation of IRS1 and SHC1. In Homo sapiens (Human), this protein is GRB10-interacting GYF protein 1 (GIGYF1).